A 264-amino-acid chain; its full sequence is S-methyl-5'-thioadenosine phosphorylase (264 aa).

Phosphate is bound by residues S14 and 55-56 (RH). A substrate-binding site is contributed by M180. T181 provides a ligand contact to phosphate. Position 204–206 (204–206 (DVD)) interacts with substrate.

The protein belongs to the PNP/MTAP phosphorylase family. MTAP subfamily. As to quaternary structure, homodimer.

The catalysed reaction is S-methyl-5'-thioadenosine + phosphate = 5-(methylsulfanyl)-alpha-D-ribose 1-phosphate + adenine. It participates in amino-acid biosynthesis; L-methionine biosynthesis via salvage pathway; S-methyl-5-thio-alpha-D-ribose 1-phosphate from S-methyl-5'-thioadenosine (phosphorylase route): step 1/1. Its activity is regulated as follows. Not inhibited by adenosine, potently inhibited by MT-DADMe-immucillin A. Its function is as follows. Catalyzes the reversible phosphorylation of S-methyl-5'-thioadenosine (MTA) to adenine and 5-methylthioribose-1-phosphate. Involved in the breakdown of MTA, a major by-product of polyamine biosynthesis. Responsible for the first step in the methionine salvage pathway after MTA has been generated from S-adenosylmethionine. Prefers MTA, with 2% activity on adenosine, 0.8% activity on S-adenosyl-L-homocysteine and no activity on other tested nucleosides. This chain is S-methyl-5'-thioadenosine phosphorylase, found in Mycobacterium tuberculosis (strain ATCC 25618 / H37Rv).